Reading from the N-terminus, the 121-residue chain is EDGDPAKGEAVFKKCMACHRVGPDAKNLVGPALTGVIDRQAGTAPGFNYSAINHAAGEAGLHWTPENIIAYLPDPNAFLRKFLADAGHAEQAKGSTKMVFKLPDEQERKDVVAYLKQFSPQ.

Cysteine 15, cysteine 18, histidine 19, and methionine 98 together coordinate heme c.

Belongs to the cytochrome c family. Binds 1 heme c group covalently per subunit.

Cytochrome c2 is found mainly in purple, non-sulfur, photosynthetic bacteria where it functions as the electron donor to the oxidized bacteriochlorophyll in the photophosphorylation pathway. However, it may also have a role in the respiratory chain and is found in some non-photosynthetic bacteria. In Rhodospirillum centenum (Rhodocista centenaria), this protein is Cytochrome c2 iso-2.